The primary structure comprises 553 residues: Transcriptional regulator HilA (553 aa).

A DNA-binding region (ompR/PhoB-type) is located at residues 11 to 107 (NKKFVFDDFI…LYGQGYRFNR (97 aa)). A 4-aspartylphosphate modification is found at Asp62. A TPR repeat occupies 372–405 (ADIKYYYGWNLFMAGQLEEALQTINECLKLDPTR).

Its function is as follows. The main transcriptional regulator of the Salmonella pathogenicity island 1 (SPI1) gene expression. Activates the expression of invasion genes by a direct action at their promoters and also indirectly by increasing the level of invF. Also binds upstream of prgH and directly activates the expression of prgHIJK operon. This chain is Transcriptional regulator HilA (hilA), found in Salmonella typhi.